A 634-amino-acid chain; its full sequence is Formate--tetrahydrofolate ligase (634 aa).

78–85 lines the ATP pocket; sequence TPLGEGKS.

Belongs to the formate--tetrahydrofolate ligase family. As to quaternary structure, homodimer.

The enzyme catalyses (6S)-5,6,7,8-tetrahydrofolate + formate + ATP = (6R)-10-formyltetrahydrofolate + ADP + phosphate. It participates in one-carbon metabolism; tetrahydrofolate interconversion. This chain is Formate--tetrahydrofolate ligase (THFS), found in Arabidopsis thaliana (Mouse-ear cress).